A 152-amino-acid chain; its full sequence is UPF0225 protein YchJ (152 aa).

It belongs to the UPF0225 family.

In Shigella dysenteriae serotype 1 (strain Sd197), this protein is UPF0225 protein YchJ.